Here is a 238-residue protein sequence, read N- to C-terminus: 3-dehydroquinate dehydratase (238 aa).

3-dehydroquinate-binding positions include 35 to 37 (ELR) and arginine 70. Histidine 133 (proton donor/acceptor) is an active-site residue. Lysine 160 serves as the catalytic Schiff-base intermediate with substrate. 3-dehydroquinate is bound by residues arginine 202 and glutamine 225.

This sequence belongs to the type-I 3-dehydroquinase family. As to quaternary structure, homodimer.

It carries out the reaction 3-dehydroquinate = 3-dehydroshikimate + H2O. Its pathway is metabolic intermediate biosynthesis; chorismate biosynthesis; chorismate from D-erythrose 4-phosphate and phosphoenolpyruvate: step 3/7. In terms of biological role, involved in the third step of the chorismate pathway, which leads to the biosynthesis of aromatic amino acids. Catalyzes the cis-dehydration of 3-dehydroquinate (DHQ) and introduces the first double bond of the aromatic ring to yield 3-dehydroshikimate. The polypeptide is 3-dehydroquinate dehydratase (Staphylococcus aureus (strain Mu3 / ATCC 700698)).